A 280-amino-acid chain; its full sequence is 2-dehydro-3-deoxyphosphooctonate aldolase (280 aa).

Belongs to the KdsA family.

It is found in the cytoplasm. It catalyses the reaction D-arabinose 5-phosphate + phosphoenolpyruvate + H2O = 3-deoxy-alpha-D-manno-2-octulosonate-8-phosphate + phosphate. It functions in the pathway carbohydrate biosynthesis; 3-deoxy-D-manno-octulosonate biosynthesis; 3-deoxy-D-manno-octulosonate from D-ribulose 5-phosphate: step 2/3. It participates in bacterial outer membrane biogenesis; lipopolysaccharide biosynthesis. The protein is 2-dehydro-3-deoxyphosphooctonate aldolase of Neisseria meningitidis serogroup C / serotype 2a (strain ATCC 700532 / DSM 15464 / FAM18).